The sequence spans 260 residues: MARATVVERGEYFLKAVVEGVPPSLVNSLRRVIISELPVMAIDNVVVVNNTSVMYDEMLAHRLGLIPLTTPLQSLPPYEDCVSGLADPSECSTRLTLQVTAEGDTTIYSGDLASDRPDVVPVYKDIPIVKLVKGQSIVLEAYAKLGVAKDHAKWQAATASYYYYPKVVVKSENCREMCKEICRQLENPIECSFNKAWTCKDLCKEGLEVTWDKNKYVFWVESFGNYDVNTALREAFRILKRKFAVFAEELFRRASVETKV.

This sequence belongs to the archaeal Rpo3/eukaryotic RPB3 RNA polymerase subunit family. Part of the RNA polymerase complex.

The protein localises to the cytoplasm. The catalysed reaction is RNA(n) + a ribonucleoside 5'-triphosphate = RNA(n+1) + diphosphate. Functionally, DNA-dependent RNA polymerase (RNAP) catalyzes the transcription of DNA into RNA using the four ribonucleoside triphosphates as substrates. In Pyrobaculum aerophilum (strain ATCC 51768 / DSM 7523 / JCM 9630 / CIP 104966 / NBRC 100827 / IM2), this protein is DNA-directed RNA polymerase subunit Rpo3.